The sequence spans 500 residues: L-arabinose isomerase (500 aa).

E306, E333, H349, and H448 together coordinate Mn(2+).

It belongs to the arabinose isomerase family. It depends on Mn(2+) as a cofactor.

The catalysed reaction is beta-L-arabinopyranose = L-ribulose. The protein operates within carbohydrate degradation; L-arabinose degradation via L-ribulose; D-xylulose 5-phosphate from L-arabinose (bacterial route): step 1/3. In terms of biological role, catalyzes the conversion of L-arabinose to L-ribulose. The chain is L-arabinose isomerase from Shewanella sp. (strain MR-7).